A 243-amino-acid chain; its full sequence is Triosephosphate isomerase (243 aa).

A substrate-binding site is contributed by 9-11; it reads NWK. His-96 serves as the catalytic Electrophile. The active-site Proton acceptor is the Glu-165. Substrate-binding positions include Gly-171, Ser-204, and 225–226; that span reads GG.

The protein belongs to the triosephosphate isomerase family. In terms of assembly, homodimer.

Its subcellular location is the cytoplasm. The enzyme catalyses D-glyceraldehyde 3-phosphate = dihydroxyacetone phosphate. It participates in carbohydrate biosynthesis; gluconeogenesis. It functions in the pathway carbohydrate degradation; glycolysis; D-glyceraldehyde 3-phosphate from glycerone phosphate: step 1/1. Functionally, involved in the gluconeogenesis. Catalyzes stereospecifically the conversion of dihydroxyacetone phosphate (DHAP) to D-glyceraldehyde-3-phosphate (G3P). This is Triosephosphate isomerase from Nostoc punctiforme (strain ATCC 29133 / PCC 73102).